Consider the following 81-residue polypeptide: Short neurotoxin 2 (81 aa).

The N-terminal stretch at 1–21 is a signal peptide; it reads MKTLLLTLVVVTIVCLDLGYT. 4 disulfides stabilise this stretch: C24–C43, C38–C60, C62–C73, and C74–C79.

This sequence belongs to the three-finger toxin family. Short-chain subfamily. Type I alpha-neurotoxin sub-subfamily. In terms of tissue distribution, expressed by the venom gland.

The protein localises to the secreted. Binds to muscle nicotinic acetylcholine receptor (nAChR) and inhibit acetylcholine from binding to the receptor, thereby impairing neuromuscular transmission. In Drysdalia coronoides (White-lipped snake), this protein is Short neurotoxin 2.